The following is a 299-amino-acid chain: Probable lipid kinase YegS-like (299 aa).

One can recognise a DAGKc domain in the interval 2–133 (EKNPITLLIL…IDIAKVNDGH (132 aa)). ATP contacts are provided by residues Thr-40, 66-72 (GDGTVNE), and Thr-95. Mg(2+) contacts are provided by Leu-215, Asp-218, and Leu-220. Glu-271 acts as the Proton acceptor in catalysis.

Belongs to the diacylglycerol/lipid kinase family. YegS lipid kinase subfamily. The cofactor is Mg(2+). Ca(2+) is required as a cofactor.

It is found in the cytoplasm. Probably phosphorylates lipids; the in vivo substrate is unknown. The polypeptide is Probable lipid kinase YegS-like (Pectobacterium atrosepticum (strain SCRI 1043 / ATCC BAA-672) (Erwinia carotovora subsp. atroseptica)).